The primary structure comprises 508 residues: Zinc finger CCCH-type with G patch domain-containing protein (508 aa).

Positions 67–86 (QQESSHHDSGTPETDTKTSV) are disordered. A compositionally biased stretch (basic and acidic residues) spans 69-86 (ESSHHDSGTPETDTKTSV). The C3H1-type zinc-finger motif lies at 161–188 (RSMVPCPYFLEGKCKFAGAECRFSHGYL). Residues 253-282 (IYPLGPEEVESDSESDSQSDTGDSSSSKAA) are disordered. Acidic residues predominate over residues 259-269 (EEVESDSESDS). Low complexity predominate over residues 270–279 (QSDTGDSSSS). The G-patch domain maps to 310 to 356 (TKGIGSKLMAKMGYIFGKGLGKDGEGRVEPIEVVVLPQGKSLDKCAE). The interval 404–426 (SLHDLRVSHPGAKPDIRKTRKSA) is disordered.

It is found in the nucleus. Transcription repressor. This is Zinc finger CCCH-type with G patch domain-containing protein from Nematostella vectensis (Starlet sea anemone).